The sequence spans 266 residues: 2-dehydro-3-deoxy-D-gluconate/2-dehydro-3-deoxy-phosphogluconate aldolase (266 aa).

Residues 36–37 (ST), 123–125 (YNI), and 151–153 (KDS) contribute to the substrate site. The Schiff-base intermediate with substrate role is filled by K151.

It belongs to the DapA family. KDPG aldolase subfamily. In terms of assembly, homotetramer; dimer of dimers.

The catalysed reaction is 2-dehydro-3-deoxy-6-phospho-D-gluconate = D-glyceraldehyde 3-phosphate + pyruvate. The enzyme catalyses 2-dehydro-3-deoxy-D-gluconate = D-glyceraldehyde + pyruvate. It carries out the reaction 2-dehydro-3-deoxy-6-phospho-D-galactonate = D-glyceraldehyde 3-phosphate + pyruvate. It catalyses the reaction 2-dehydro-3-deoxy-D-galactonate = D-glyceraldehyde + pyruvate. The protein operates within carbohydrate acid metabolism; 2-dehydro-3-deoxy-D-gluconate degradation; D-glyceraldehyde 3-phosphate and pyruvate from 2-dehydro-3-deoxy-D-gluconate: step 2/2. Involved in the degradation of glucose via the Entner-Doudoroff pathway. Catalyzes the reversible cleavage of 2-keto-3-deoxy-6-phosphogluconate (KDPG) and 2-keto-3-deoxygluconate (KDG) forming pyruvate and glyceraldehyde 3-phosphate or glyceraldehyde, respectively. It is also able to catalyze the reversible cleavage of 2-keto-3-deoxy-6-phosphogalactonate (KDPGal) and 2-keto-3-deoxygalactonate (KDGal). It is equally active with both D- and L-glyceraldehyde. The chain is 2-dehydro-3-deoxy-D-gluconate/2-dehydro-3-deoxy-phosphogluconate aldolase from Picrophilus torridus (strain ATCC 700027 / DSM 9790 / JCM 10055 / NBRC 100828 / KAW 2/3).